The chain runs to 1092 residues: Neural cell adhesion molecule 1-B (1092 aa).

The signal sequence occupies residues 1-19 (MLHIKDLIWTLYFIGAAVA). 5 Ig-like C2-type domains span residues 20-108 (LEVN…GTVN), 113-202 (QKLT…KDIQ), 208-295 (PPLI…EAIV), 303-397 (PKMT…FEVQ), and 400-489 (PKIR…FILV). The Extracellular segment spans residues 20 to 705 (LEVNIVPDQG…ATSASTGLGT (686 aa)). 2 disulfides stabilise this stretch: Cys-41/Cys-93 and Cys-136/Cys-186. An N-linked (GlcNAc...) asparagine glycan is attached at Asn-82. Heparin is bound by residues 149 to 153 (RHKGK) and 158 to 162 (KKDVR). A glycan (N-linked (GlcNAc...) asparagine) is linked at Asn-219. A disulfide bridge links Cys-232 with Cys-282. Asn-310, Asn-341, Asn-417, Asn-443, and Asn-472 each carry an N-linked (GlcNAc...) asparagine glycan. A disulfide bridge connects residues Cys-323 and Cys-379. Cysteines 420 and 473 form a disulfide. Fibronectin type-III domains are found at residues 493 to 592 (TPSS…TQPV) and 595 to 691 (EPSA…TAKP). A helical transmembrane segment spans residues 706–723 (GAIVGILIVTFVLLLVVV). Residues 724 to 1092 (DVTCFFLNKC…TQRNVNESKA (369 aa)) are Cytoplasmic-facing. Basic and acidic residues predominate over residues 754-784 (KDIEEGKAAFSKDESKEPIVEVRTEEERTPN). Disordered stretches follow at residues 754–1005 (KDIE…GGTF) and 1024–1092 (TPAA…ESKA). Low complexity-rich tracts occupy residues 820–832 (TTVTTNSDTITET) and 839–851 (SPTSETTTLTSST). The span at 860–871 (DSNTVQSVQATP) shows a compositional bias: polar residues. Residues 917-929 (PSAATSAAEPPTA) show a composition bias toward low complexity. The segment covering 968–978 (AQPSTVKSPTE) has biased composition (polar residues). A compositionally biased stretch (basic and acidic residues) spans 1050–1068 (AKTEKTQVEENSKPEETDV). The span at 1080-1092 (NEATQRNVNESKA) shows a compositional bias: polar residues.

Polysialylated by ST8SIA2 and ST8SIA4. Polysialylation modulates cell interactions by confering both attractive and repulsive properties that are highly regulated by ST8SIA2 and ST8SIA4. Polysialylation is formed on a-2,3-linked sialic acid of core glycans.

It localises to the cell membrane. This protein is a cell adhesion molecule involved in neuron-neuron adhesion, neurite fasciculation, outgrowth of neurites, etc. This Xenopus laevis (African clawed frog) protein is Neural cell adhesion molecule 1-B.